The following is a 77-amino-acid chain: Conotoxin Bt6.6 (77 aa).

A signal peptide spans 1 to 19 (MEKLTILLLVAAVLMSTQA). The propeptide occupies 20-38 (LIQSDGEKRQQAKINFLSX). 3 cysteine pairs are disulfide-bonded: C51-C65, C58-C69, and C64-C74.

Belongs to the conotoxin O2 superfamily. In terms of tissue distribution, expressed by the venom duct.

It is found in the secreted. The sequence is that of Conotoxin Bt6.6 from Conus betulinus (Beech cone).